Consider the following 346-residue polypeptide: MPSPLALRPYLPSEFSPSVDARPCSSPSELPAKLLLGATPPRAPRLPRRLAWCSIDWEQVCLLQRLGAGGFGSVYKATYHGVPVAIKQVNKCTKNRLASRRSFWAELNVARLRHDNIVRVVAASTRTPAGSNSLGTIIMEFGGNVTLHQVIYGAASHPEGDAGEPHCSTGGPLTLGKCLKYSLDVVNGLLFLHSQSIVHLDLKPANILISEQDVCKISDFGCSEKLEDLLCFQTPLYPLGGTYTHRAPELLKGEGVTPKADIYSFAITLWQMTTKQAPYSGERQHILYAVVAYDLRPSLSAAVFQDSLPGQRLGDVIRRCWRPSAAQRPSARPLLVDLTSLKAEFG.

The Protein kinase domain maps to Val60–Leu341. ATP contacts are provided by residues Leu66 to Val74 and Lys87. The Proton acceptor role is filled by Asp201.

This sequence belongs to the protein kinase superfamily. Ser/Thr protein kinase family.

It carries out the reaction L-seryl-[protein] + ATP = O-phospho-L-seryl-[protein] + ADP + H(+). The catalysed reaction is L-threonyl-[protein] + ATP = O-phospho-L-threonyl-[protein] + ADP + H(+). The protein is Proto-oncogene serine/threonine-protein kinase mos of Chlorocebus aethiops (Green monkey).